Consider the following 1863-residue polypeptide: 5'-3' DNA helicase ZGRF1 (1863 aa).

Disordered stretches follow at residues 78–110, 132–196, and 300–349; these read SRAV…QPSG, ENSE…PLSL, and TQSI…PEAQ. Residues 81 to 90 show a composition bias toward basic and acidic residues; sequence VEPDGSREAL. The segment covering 92–105 has biased composition (low complexity); sequence SGSRTLVSSSRSLG. Composition is skewed to polar residues over residues 173 to 185 and 300 to 321; these read PVST…ITFS and TQSI…TTSR. Ser-331 and Ser-445 each carry phosphoserine. 3 disordered regions span residues 460-496, 524-545, and 610-664; these read PVSP…SKSN, TSDT…ERWE, and GDVK…GVSP. Residues 533-545 show a composition bias toward basic and acidic residues; it reads EDSRLSQDSERWE. 4 residues coordinate Zn(2+): Cys-1111, His-1113, Cys-1136, and Cys-1144. A GRF-type zinc finger spans residues 1111–1153; sequence CHHNQPAKLVMVKKEGPNKGRLFYTCDKSKDNQCKFFKWLEEV.

Interacts with DNA repair protein RAD51; the interaction promotes RAD51 strand exchange activity. Also interacts with DNA repair proteins EXO1 and BRCA1; the interactions are increased following DNA damage induction.

It is found in the nucleus. The enzyme catalyses ATP + H2O = ADP + phosphate + H(+). The catalysed reaction is Couples ATP hydrolysis with the unwinding of duplex DNA at the replication fork by translocating in the 5'-3' direction. This creates two antiparallel DNA single strands (ssDNA). The leading ssDNA polymer is the template for DNA polymerase III holoenzyme which synthesizes a continuous strand.. 5'-3' DNA helicase which is recruited to sites of DNA damage and promotes repair of replication-blocking DNA lesions through stimulation of homologous recombination (HR). Promotes HR by directly stimulating RAD51-mediated strand exchange activity. Not required to load RAD51 at sites of DNA damage but promotes recombinational repair after RAD51 recruitment. Also promotes HR by positively regulating EXO1-mediated DNA end resection of DNA double-strand breaks. Required for recruitment of replication protein RPA2 to DNA damage sites. Promotes the initiation of the G2/M checkpoint but not its maintenance. Catalyzes Holliday junction branch migration and dissociation of D-loops and DNA flaps. The polypeptide is 5'-3' DNA helicase ZGRF1 (Zgrf1) (Mus musculus (Mouse)).